A 1001-amino-acid chain; its full sequence is E3 ubiquitin-protein ligase BRE1B (1001 aa).

Residues 1 to 40 form a disordered region; it reads MSGLSNKRAAGDGGSGPPEKKMNREEKTTTTLIEPIRLGG. Positions 18 to 28 are enriched in basic and acidic residues; the sequence is PEKKMNREEKT. Position 20 is an N6-acetyllysine (K20). At S42 the chain carries Phosphoserine. Residues 55 to 91 are a coiled coil; the sequence is KNKKLAERLEQRQACEDELRERIEKLEKRQATDDATL. Residues 122 to 142 form a disordered region; it reads TEVPGCQEGLTRDVIPRPDPG. 2 coiled-coil regions span residues 189–377 and 437–525; these read KAAV…LRSL and LQKK…ASGS. Residues K355 and K517 each carry the N6-acetyllysine modification. The segment at 519-647 is disordered; that stretch reads RAQASGSSHC…KAKVEEAKRK (129 aa). Over residues 565–576 the composition is skewed to low complexity; sequence ALLAGATSATSS. Residues K578 and K579 each participate in a glycyl lysine isopeptide (Lys-Gly) (interchain with G-Cter in SUMO2) cross-link. A phosphoserine mark is found at S584 and S585. Composition is skewed to basic and acidic residues over residues 602-619 and 633-647; these read RGREPEARPKRELREREG and RADREKAKVEEAKRK. Residues 627–946 adopt a coiled-coil conformation; the sequence is AASTLSRADR…EEIKEYKARL (320 aa). The segment at 948-987 adopts an RING-type zinc-finger fold; it reads CPCCNTRKKDAVLTKCFHVFCFECVRGRYEARQRKCPKCN.

The protein belongs to the BRE1 family. Component of the RNF20/40 complex (also known as BRE1 complex) probably composed of 2 copies of RNF20/BRE1A and 2 copies of RNF40/BRE1B. Interacts with UBE2E1/UBCH6. Interacts with RB1 and WAC.

It localises to the nucleus. It catalyses the reaction S-ubiquitinyl-[E2 ubiquitin-conjugating enzyme]-L-cysteine + [acceptor protein]-L-lysine = [E2 ubiquitin-conjugating enzyme]-L-cysteine + N(6)-ubiquitinyl-[acceptor protein]-L-lysine.. It participates in protein modification; protein ubiquitination. Functionally, component of the RNF20/40 E3 ubiquitin-protein ligase complex that mediates monoubiquitination of 'Lys-120' of histone H2B (H2BK120ub1). H2BK120ub1 gives a specific tag for epigenetic transcriptional activation and is also prerequisite for histone H3 'Lys-4' and 'Lys-79' methylation (H3K4me and H3K79me, respectively). It thereby plays a central role in histone code and gene regulation. The RNF20/40 complex forms a H2B ubiquitin ligase complex in cooperation with the E2 enzyme UBE2A or UBE2B; reports about the cooperation with UBE2E1/UBCH are contradictory. Required for transcriptional activation of Hox genes. The chain is E3 ubiquitin-protein ligase BRE1B (Rnf40) from Mus musculus (Mouse).